The sequence spans 403 residues: Phosphoserine phosphatase RsbP (403 aa).

The PAS domain maps to 1 to 42; that stretch reads MDKQLNDAPCGFLALSEEGSIIAANRTLIKILDYEPEQVIGQ. The PPM-type phosphatase domain occupies 191–402; it reads QVQIDSYYNA…DDECFILVDV (212 aa).

It depends on Mn(2+) as a cofactor.

It carries out the reaction O-phospho-L-serine + H2O = L-serine + phosphate. The enzyme catalyses O-phospho-D-serine + H2O = D-serine + phosphate. In terms of biological role, positive regulator of sigma-B activity. Dephosphorylates RsbV in response to energy stress. In Bacillus subtilis (strain 168), this protein is Phosphoserine phosphatase RsbP (rsbP).